The chain runs to 637 residues: Threonine--tRNA ligase (637 aa).

The TGS domain maps to 1–61 (MPVITLPNGS…EQDAALSIVT (61 aa)). Residues 242 to 533 (DHRKLGKKFD…LIENYEGAFP (292 aa)) are catalytic. Cys333, His384, and His510 together coordinate Zn(2+).

It belongs to the class-II aminoacyl-tRNA synthetase family. As to quaternary structure, homodimer. Zn(2+) is required as a cofactor.

It is found in the cytoplasm. It carries out the reaction tRNA(Thr) + L-threonine + ATP = L-threonyl-tRNA(Thr) + AMP + diphosphate + H(+). Its function is as follows. Catalyzes the attachment of threonine to tRNA(Thr) in a two-step reaction: L-threonine is first activated by ATP to form Thr-AMP and then transferred to the acceptor end of tRNA(Thr). Also edits incorrectly charged L-seryl-tRNA(Thr). In Teredinibacter turnerae (strain ATCC 39867 / T7901), this protein is Threonine--tRNA ligase.